A 127-amino-acid chain; its full sequence is Ribonuclease P protein component 1 (127 aa).

This sequence belongs to the eukaryotic/archaeal RNase P protein component 1 family. Consists of a catalytic RNA component and at least 4 protein subunits. Forms a subcomplex with Rnp4 which stimulates the catalytic RNA.

It is found in the cytoplasm. The catalysed reaction is Endonucleolytic cleavage of RNA, removing 5'-extranucleotides from tRNA precursor.. Functionally, part of ribonuclease P, a protein complex that generates mature tRNA molecules by cleaving their 5'-ends. The RNA is catalytic, but its KM for pre-tRNA is 170-fold decreased in the presence of the 4 known protein subunits (Rnp1-4). The protein subunits also decrease the amount of Mg(2+) needed for activity. This is Ribonuclease P protein component 1 from Pyrococcus furiosus (strain ATCC 43587 / DSM 3638 / JCM 8422 / Vc1).